Reading from the N-terminus, the 180-residue chain is Large ribosomal subunit protein uL5 (180 aa).

Belongs to the universal ribosomal protein uL5 family. As to quaternary structure, part of the 50S ribosomal subunit; part of the 5S rRNA/L5/L18/L25 subcomplex. Contacts the 5S rRNA and the P site tRNA. Forms a bridge to the 30S subunit in the 70S ribosome.

In terms of biological role, this is one of the proteins that bind and probably mediate the attachment of the 5S RNA into the large ribosomal subunit, where it forms part of the central protuberance. In the 70S ribosome it contacts protein S13 of the 30S subunit (bridge B1b), connecting the 2 subunits; this bridge is implicated in subunit movement. Contacts the P site tRNA; the 5S rRNA and some of its associated proteins might help stabilize positioning of ribosome-bound tRNAs. The polypeptide is Large ribosomal subunit protein uL5 (Mycoplasma capricolum subsp. capricolum (strain California kid / ATCC 27343 / NCTC 10154)).